Reading from the N-terminus, the 226-residue chain is Transmembrane gamma-carboxyglutamic acid protein 4 (226 aa).

The N-terminal stretch at 1–17 (MFTLLVLLSQLPTVTLG) is a signal peptide. The propeptide occupies 18 to 49 (FPHCARGPKASKHAGEEVFTSKEEANFFIHRR). The Extracellular portion of the chain corresponds to 50–113 (LLYNRFDLEL…KSDGNREKID (64 aa)). The region spanning 52 to 98 (YNRFDLELFTPGNLERECNEELCNYEEAREIFVDEDKTIAFWQEYSA) is the Gla domain. Cys69 and Cys74 form a disulfide bridge. At Glu72 the chain carries 4-carboxyglutamate. The helical transmembrane segment at 114–134 (VMGLLTGLIAAGVFLVIFGLL) threads the bilayer. The Cytoplasmic portion of the chain corresponds to 135 to 226 (GYYLCITKCN…FKKSMSLPSH (92 aa)). Ser163 is subject to Phosphoserine. Residues 186-189 (LPSY) carry the LPXY motif; mediates binding to WW domain-containing proteins motif. Positions 204 to 207 (PPPY) match the PPXY motif; mediates binding to WW domain-containing proteins motif.

The protein belongs to the commissureless family. As to quaternary structure, interacts (via cytoplasmic domain) with WW domain-containing proteins MAGI1, MAGI3, NEDD4, NEDD4L, WWTR1/TAZ and YAP1. In terms of processing, gamma-carboxyglutamate residues are formed by vitamin K dependent carboxylation. These residues are essential for the binding of calcium. Widely expressed with highest levels in kidney.

The protein localises to the endoplasmic reticulum-Golgi intermediate compartment membrane. It is found in the cell membrane. In terms of biological role, may control axon guidance across the CNS. Prevents the delivery of ROBO1 at the cell surface and down-regulates its expression. This Homo sapiens (Human) protein is Transmembrane gamma-carboxyglutamic acid protein 4.